Here is a 220-residue protein sequence, read N- to C-terminus: Cytidylate kinase (220 aa).

10–18 (GPAGAGKST) contacts ATP.

It belongs to the cytidylate kinase family. Type 1 subfamily.

The protein localises to the cytoplasm. The catalysed reaction is CMP + ATP = CDP + ADP. It carries out the reaction dCMP + ATP = dCDP + ADP. The chain is Cytidylate kinase from Alkaliphilus metalliredigens (strain QYMF).